A 517-amino-acid polypeptide reads, in one-letter code: Ribonuclease Y (517 aa).

Residues 1–21 (MIESLIALIAAIVGLGIGYLV) form a helical membrane-spanning segment. The KH domain maps to 207 to 273 (LINVINIKND…TKVIELLVED (67 aa)). Positions 333–426 (ALAHSLEVAH…VCAADTLSAA (94 aa)) constitute an HD domain.

This sequence belongs to the RNase Y family.

It localises to the cell membrane. Functionally, endoribonuclease that initiates mRNA decay. The sequence is that of Ribonuclease Y from Campylobacter jejuni subsp. doylei (strain ATCC BAA-1458 / RM4099 / 269.97).